The sequence spans 361 residues: Mannose-1-phosphate guanyltransferase 2 (361 aa).

It belongs to the transferase hexapeptide repeat family.

It localises to the cytoplasm. It carries out the reaction alpha-D-mannose 1-phosphate + GTP + H(+) = GDP-alpha-D-mannose + diphosphate. It functions in the pathway nucleotide-sugar biosynthesis; GDP-alpha-D-mannose biosynthesis; GDP-alpha-D-mannose from alpha-D-mannose 1-phosphate (GTP route): step 1/1. Its function is as follows. Involved in cell wall synthesis where it is required for glycosylation. Involved in cell cycle progression through cell-size checkpoint. The polypeptide is Mannose-1-phosphate guanyltransferase 2 (MPG1) (Candida glabrata (strain ATCC 2001 / BCRC 20586 / JCM 3761 / NBRC 0622 / NRRL Y-65 / CBS 138) (Yeast)).